Consider the following 403-residue polypeptide: Cytoplasmic tRNA 2-thiolation protein 2 (403 aa).

It belongs to the CTU2/NCS2 family.

It localises to the cytoplasm. Its pathway is tRNA modification; 5-methoxycarbonylmethyl-2-thiouridine-tRNA biosynthesis. In terms of biological role, plays a central role in 2-thiolation of mcm(5)S(2)U at tRNA wobble positions of tRNA(Lys), tRNA(Glu) and tRNA(Gln). May act by forming a heterodimer with NCS6/CTU1 that ligates sulfur from thiocarboxylated URM1 onto the uridine of tRNAs at wobble position. The polypeptide is Cytoplasmic tRNA 2-thiolation protein 2 (Drosophila ananassae (Fruit fly)).